Reading from the N-terminus, the 62-residue chain is uncharacterized protein (62 aa).

The signal sequence occupies residues Met-1 to Ala-22.

This is an uncharacterized protein from Archaeoglobus fulgidus (strain ATCC 49558 / DSM 4304 / JCM 9628 / NBRC 100126 / VC-16).